A 1024-amino-acid polypeptide reads, in one-letter code: Carbamoyl phosphate synthase large chain (1024 aa).

The carboxyphosphate synthetic domain stretch occupies residues 1–396 (MDIKKILVIG…AWQKAVRMID (396 aa)). ATP contacts are provided by R125, R165, G171, G172, K204, L206, E211, G237, V238, H239, Q280, and E294. An ATP-grasp 1 domain is found at 129 to 323 (QKAMREAGIP…LAYIAAKLAL (195 aa)). The Mg(2+) site is built by Q280, E294, and N296. Mn(2+)-binding residues include Q280, E294, and N296. An oligomerization domain region spans residues 397-536 (IGEPGLVGGP…LTYGGQYDDK (140 aa)). The carbamoyl phosphate synthetic domain stretch occupies residues 536-917 (KTPGVDYLVV…LKSWLSATPN (382 aa)). An ATP-grasp 2 domain is found at 660–849 (SKLLDRLGIK…YMSLVADVLT (190 aa)). ATP contacts are provided by R696, K735, E742, G766, V767, H768, S769, Q809, and E820. Positions 809, 820, and 822 each coordinate Mg(2+). 3 residues coordinate Mn(2+): Q809, E820, and N822. The region spanning 917 to 1024 (NKIPSKTALI…KNGKLEVAPW (108 aa)) is the MGS-like domain. Residues 918 to 1024 (KIPSKTALIY…KNGKLEVAPW (107 aa)) form an allosteric domain region.

The protein belongs to the CarB family. As to quaternary structure, composed of two chains; the small (or glutamine) chain promotes the hydrolysis of glutamine to ammonia, which is used by the large (or ammonia) chain to synthesize carbamoyl phosphate. Tetramer of heterodimers (alpha,beta)4. It depends on Mg(2+) as a cofactor. Mn(2+) serves as cofactor.

The enzyme catalyses hydrogencarbonate + L-glutamine + 2 ATP + H2O = carbamoyl phosphate + L-glutamate + 2 ADP + phosphate + 2 H(+). The catalysed reaction is hydrogencarbonate + NH4(+) + 2 ATP = carbamoyl phosphate + 2 ADP + phosphate + 2 H(+). The protein operates within amino-acid biosynthesis; L-arginine biosynthesis; carbamoyl phosphate from bicarbonate: step 1/1. Its pathway is pyrimidine metabolism; UMP biosynthesis via de novo pathway; (S)-dihydroorotate from bicarbonate: step 1/3. In terms of biological role, large subunit of the glutamine-dependent carbamoyl phosphate synthetase (CPSase). CPSase catalyzes the formation of carbamoyl phosphate from the ammonia moiety of glutamine, carbonate, and phosphate donated by ATP, constituting the first step of 2 biosynthetic pathways, one leading to arginine and/or urea and the other to pyrimidine nucleotides. The large subunit (synthetase) binds the substrates ammonia (free or transferred from glutamine from the small subunit), hydrogencarbonate and ATP and carries out an ATP-coupled ligase reaction, activating hydrogencarbonate by forming carboxy phosphate which reacts with ammonia to form carbamoyl phosphate. This chain is Carbamoyl phosphate synthase large chain, found in Pyrobaculum aerophilum (strain ATCC 51768 / DSM 7523 / JCM 9630 / CIP 104966 / NBRC 100827 / IM2).